Consider the following 660-residue polypeptide: UvrABC system protein B (660 aa).

The 171-residue stretch at 26–196 (DGIDEKKEHQ…ELNKGQFDVK (171 aa)) folds into the Helicase ATP-binding domain. 39–46 (GVTGSGKT) is an ATP binding site. The Beta-hairpin signature appears at 92–115 (YFDFYKPEAYIPKSDLYIEKTSKN). Residues 431–593 (QIEDIYDHLK…IIPKTIVKPI (163 aa)) form the Helicase C-terminal domain. Residues 622 to 657 (KKFIDQMVRKMTQLAKANKFEEAIEIRDYLIEIGIE) enclose the UVR domain.

It belongs to the UvrB family. As to quaternary structure, forms a heterotetramer with UvrA during the search for lesions. Interacts with UvrC in an incision complex.

The protein localises to the cytoplasm. In terms of biological role, the UvrABC repair system catalyzes the recognition and processing of DNA lesions. A damage recognition complex composed of 2 UvrA and 2 UvrB subunits scans DNA for abnormalities. Upon binding of the UvrA(2)B(2) complex to a putative damaged site, the DNA wraps around one UvrB monomer. DNA wrap is dependent on ATP binding by UvrB and probably causes local melting of the DNA helix, facilitating insertion of UvrB beta-hairpin between the DNA strands. Then UvrB probes one DNA strand for the presence of a lesion. If a lesion is found the UvrA subunits dissociate and the UvrB-DNA preincision complex is formed. This complex is subsequently bound by UvrC and the second UvrB is released. If no lesion is found, the DNA wraps around the other UvrB subunit that will check the other stand for damage. The chain is UvrABC system protein B from Metamycoplasma arthritidis (strain 158L3-1) (Mycoplasma arthritidis).